Consider the following 121-residue polypeptide: Dihydroneopterin aldolase (121 aa).

2 residues coordinate substrate: E16 and M111.

Belongs to the archaeal dihydroneopterin aldolase family. In terms of assembly, homotetramer.

It catalyses the reaction 7,8-dihydroneopterin = 6-hydroxymethyl-7,8-dihydropterin + glycolaldehyde. The protein operates within cofactor biosynthesis; 5,6,7,8-tetrahydromethanopterin biosynthesis. Catalyzes the conversion of 7,8-dihydroneopterin (H2Neo) to 6-hydroxymethyl-7,8-dihydropterin (6-HMD). The sequence is that of Dihydroneopterin aldolase from Methanopyrus kandleri (strain AV19 / DSM 6324 / JCM 9639 / NBRC 100938).